Here is a 201-residue protein sequence, read N- to C-terminus: Superoxide dismutase [Fe] (201 aa).

Residues histidine 27, histidine 79, aspartate 161, and histidine 165 each contribute to the Fe cation site.

It belongs to the iron/manganese superoxide dismutase family. Homodimer. It depends on Fe cation as a cofactor.

The catalysed reaction is 2 superoxide + 2 H(+) = H2O2 + O2. Its function is as follows. Destroys superoxide anion radicals which are normally produced within the cells and which are toxic to biological systems. The sequence is that of Superoxide dismutase [Fe] (sodB) from Synechococcus elongatus (strain ATCC 33912 / PCC 7942 / FACHB-805) (Anacystis nidulans R2).